Reading from the N-terminus, the 416-residue chain is Transcription factor PIL1 (416 aa).

Disordered regions lie at residues 1 to 24, 89 to 113, and 197 to 231; these read MEAK…NIKP, VSQS…KLKS, and ESTY…KRST. Residues 8 to 22 are compositionally biased toward low complexity; sequence SSSSEPNMISPSSNI. The stretch at 95 to 124 forms a coiled coil; that stretch reads QQDKETNEQMNNNKKKLKSSKIEFERNVSK. The span at 216–229 shows a compositional bias: basic residues; that stretch reads VHARTRKPVTKRKR. In terms of domain architecture, bHLH spans 229-278; it reads RSTEVHKLYERKRRDEFNKKMRALQDLLPNCYKDDKASLLDEAIKYMRTL.

In terms of assembly, homodimer. Interacts with APRR1/TOC1. Associates to PTAC12/HMR/PAP5 which acts as a transcriptional coactivator. As to expression, mainly expressed in stems, fruits and flowers and, to a lower extent, in leaves, seedlings and roots. Accumulates in etiolated seedlings.

It localises to the nucleus. Functionally, transcription factor. Involved in responses to transient and long-term shade. Required for the light-mediated inhibition of hypocotyl elongation. Necessary for rapid light-induced expression of the photomorphogenesis- and circadian-related gene APRR9. Seems to play a role in multiple PHYB responses, such as flowering transition and petiole elongation. This Arabidopsis thaliana (Mouse-ear cress) protein is Transcription factor PIL1.